Here is a 65-residue protein sequence, read N- to C-terminus: Sarcoplasmic/endoplasmic reticulum calcium ATPase regulator ARLN (65 aa).

Met-1 carries the N-acetylmethionine modification. Residues 1-38 are disordered; the sequence is MEVGQAASGTDGVRERRGSSAARRRSQDEPVQSGMNGI. 2 positions are modified to phosphoserine: Ser-19 and Ser-26. A helical membrane pass occupies residues 44-64; the sequence is WLDLWLFILFDLALFIFVYLL.

Homooligomer. Can also form heterooligomers with other sarcoplasmic/endoplasmic reticulum calcium ATPase (SERCA) regulators ERLN, PLN, SLN and STRIT1/DWORF. Monomer. Interacts as a monomer with ATP2A2/SERCA2; the interaction results in inhibition of ATP2A2 Ca(2+) affinity.

It localises to the endoplasmic reticulum membrane. In terms of biological role, inhibits the activity of the calcium ATPases ATP2A2/SERCA2 and ATP2A3/SERCA3 by decreasing their apparent affinity for Ca(2+). The polypeptide is Sarcoplasmic/endoplasmic reticulum calcium ATPase regulator ARLN (Arln) (Rattus norvegicus (Rat)).